We begin with the raw amino-acid sequence, 89 residues long: Small ribosomal subunit protein uS15 (89 aa).

Belongs to the universal ribosomal protein uS15 family. In terms of assembly, part of the 30S ribosomal subunit. Forms a bridge to the 50S subunit in the 70S ribosome, contacting the 23S rRNA.

Its function is as follows. One of the primary rRNA binding proteins, it binds directly to 16S rRNA where it helps nucleate assembly of the platform of the 30S subunit by binding and bridging several RNA helices of the 16S rRNA. Forms an intersubunit bridge (bridge B4) with the 23S rRNA of the 50S subunit in the ribosome. This is Small ribosomal subunit protein uS15 from Nocardia farcinica (strain IFM 10152).